We begin with the raw amino-acid sequence, 346 residues long: MNEREYIGRGRRKLEHLRFFQEDSKGSNGLEDVHLVHQALPELNWSDIDLTCRWLGKTLAAPFIINALTGGPPETLAINAALARVARRTGIALAVGSQRAGLENKEWRESFTIVRRENANGLILANIGAGNSPADAGEAVAMIAADGLQVHLNAAQELIMPEGDRAFRGWLENIRGMVNTLGVPVIAKEVGFGLSRETALQLYQAGVRIMDVGGRGGTNFAAIEERRRGRSVAALAGWGLSTAVSILEIRELGLPVEVVATGGIRSALDAARALALGAKIVGAAGYFLKILLEQGEDALTEEILQWQEDLKRICLLTGCTTPAELATKPVVITGQTRAWLEGRQRH.

A substrate-binding site is contributed by 12–13 (RK). FMN is bound by residues 67–69 (ALT), Ser-97, and Asn-126. Substrate is bound at residue 97-99 (SQR). Residue Gln-156 coordinates substrate. Glu-157 is a binding site for Mg(2+). FMN-binding positions include Lys-188, Thr-218, 263-265 (GIR), and 284-285 (AG).

The protein belongs to the IPP isomerase type 2 family. In terms of assembly, homooctamer. Dimer of tetramers. FMN serves as cofactor. Requires NADPH as cofactor. The cofactor is Mg(2+).

The protein resides in the cytoplasm. It carries out the reaction isopentenyl diphosphate = dimethylallyl diphosphate. In terms of biological role, involved in the biosynthesis of isoprenoids. Catalyzes the 1,3-allylic rearrangement of the homoallylic substrate isopentenyl (IPP) to its allylic isomer, dimethylallyl diphosphate (DMAPP). This is Isopentenyl-diphosphate delta-isomerase from Moorella thermoacetica (strain ATCC 39073 / JCM 9320).